Reading from the N-terminus, the 513-residue chain is Protein CYCLOPS (513 aa).

Disordered stretches follow at residues 329–380 and 395–435; these read QGRT…STQN and DDRK…AEAK. The span at 333 to 347 shows a compositional bias: low complexity; it reads ASGEPSQSESSAAAP. Over residues 359–380 the composition is skewed to polar residues; it reads PSNSNQTLGDSSWKQVGESTQN. Short sequence motifs (nuclear localization signal) lie at residues 397–400 and 421–424; these read RKRK and KKRR. A coiled-coil region spans residues 447 to 513; the sequence is MQAILKRCEN…ERILSETGKI (67 aa).

It belongs to the CYCLOPS family. In terms of assembly, forms homodimers. Interacts with CCAMK. As to expression, highly expressed in roots. Expressed in root hairs and nodules. Not detected in leaves or flowers.

It is found in the nucleus. In terms of biological role, involved symbiotic signaling. Required for root infection by symbiotic rhizobia, infection thread (IT) formation, and nodule development. Required for proper induction of early nodulin gene expression. Probably not involved in nodule organogenesis. Involved in arbuscular mycorrhizal (AM) symbiosis. Required for fungal infection of the outer cortical cell layers, and for arbuscule development during the AM symbiosis. Acts downstream of CCAMK. Required for symbiosome formation (i.e. the release of the bacteria from the ITs) and subsequent symbiosome development. Required for the expression of the nodule-specific RPG gene, which controls proper IT growth and is essential for symbiosome formation. Acts upstream of ERN1, a transcriptional regulator required for nodulation. This is Protein CYCLOPS from Medicago truncatula (Barrel medic).